The following is a 384-amino-acid chain: 3,7-dimethylxanthine N-methyltransferase 1 (384 aa).

S-adenosyl-L-homocysteine contacts are provided by tyrosine 18, cysteine 61, asparagine 66, aspartate 100, leucine 101, serine 139, phenylalanine 140, and cysteine 156. Residue tyrosine 157 participates in theobromine binding. Cysteine 158 is an S-adenosyl-L-homocysteine binding site. Residues histidine 160 and tryptophan 161 each coordinate theobromine. Residue asparagine 178 participates in Mg(2+) binding. Serine 237 is a theobromine binding site. Residues aspartate 260, phenylalanine 262, and asparagine 263 each coordinate Mg(2+). Tyrosine 368 provides a ligand contact to theobromine.

It belongs to the methyltransferase superfamily. Type-7 methyltransferase family. It depends on Mg(2+) as a cofactor. As to expression, highly expressed in developing endosperm and immature fruits (grains). Detected in young leaves and flower buds, but not in mature fruits.

The enzyme catalyses theobromine + S-adenosyl-L-methionine = caffeine + S-adenosyl-L-homocysteine + H(+). It catalyses the reaction 1,7-dimethylxanthine + S-adenosyl-L-methionine = caffeine + S-adenosyl-L-homocysteine + H(+). The catalysed reaction is 7-methylxanthine + S-adenosyl-L-methionine = theobromine + S-adenosyl-L-homocysteine + H(+). It functions in the pathway alkaloid biosynthesis. In terms of biological role, involved in the biosynthesis of caffeine. Catalyzes the conversion of 7-methylxanthine to caffeine, likely via theobromine as an intermediate. This chain is 3,7-dimethylxanthine N-methyltransferase 1, found in Coffea arabica (Arabian coffee).